We begin with the raw amino-acid sequence, 296 residues long: Enoyl-CoA hydratase AFT3-1 (296 aa).

The Peroxisomal targeting signal type 1 signature appears at 294–296 (PKL).

Belongs to the enoyl-CoA hydratase/isomerase family.

The protein localises to the peroxisome. It carries out the reaction a (3S)-3-hydroxyacyl-CoA = a (2E)-enoyl-CoA + H2O. The enzyme catalyses a 4-saturated-(3S)-3-hydroxyacyl-CoA = a (3E)-enoyl-CoA + H2O. Its pathway is mycotoxin biosynthesis. Functionally, enoyl-CoA hydratase; part of the gene clusters that mediate the biosynthesis of the host-selective toxins (HSTs) AF-toxins responsible for Alternaria black spot of strawberry disease by the strawberry pathotype. AF-toxin I and III are valine derivatives of 2,3-dyhydroxy-isovaleric acid and 2-hydroxy-isovaleric acid respectively, while AF II is an isoleucine derivative of 2-hydroxy-valeric acid. These derivatives are bound to a 9,10-epoxy-8-hydroxy-9-methyl-decatrienoic acid (EDA) moiety. On cellular level, AF-toxins affect plasma membrane of susceptible cells and cause a sudden increase in loss of K(+) after a few minutes of toxin treatment. The aldo-keto reductase AFTS1 catalyzes the conversion of 2-keto-isovaleric acid (2-KIV) to 2-hydroxy-isovaleric acid (2-HIV) by reduction of its ketone to an alcohol. The acyl-CoA ligase AFT1, the hydrolase AFT2 and the enoyl-CoA hydratases AFT3 and AFT6, but also the polyketide synthase AFT9, the acyl-CoA dehydrogenase AFT10, the cytochrome P450 monooxygenase AFT11 and the oxidoreductase AFT12 are all involved in the biosynthesis of the AK-, AF- and ACT-toxin common EDA structural moiety. The exact function of each enzyme, and of additional enzymes identified within the AF-toxin clusters have still to be determined. This Alternaria alternata (Alternaria rot fungus) protein is Enoyl-CoA hydratase AFT3-1 (AFT3-1).